Here is a 269-residue protein sequence, read N- to C-terminus: Hydroxyethylthiazole kinase (269 aa).

A substrate-binding site is contributed by M42. ATP-binding residues include R118 and S164. G191 lines the substrate pocket.

It belongs to the Thz kinase family. The cofactor is Mg(2+).

It catalyses the reaction 5-(2-hydroxyethyl)-4-methylthiazole + ATP = 4-methyl-5-(2-phosphooxyethyl)-thiazole + ADP + H(+). It participates in cofactor biosynthesis; thiamine diphosphate biosynthesis; 4-methyl-5-(2-phosphoethyl)-thiazole from 5-(2-hydroxyethyl)-4-methylthiazole: step 1/1. Functionally, catalyzes the phosphorylation of the hydroxyl group of 4-methyl-5-beta-hydroxyethylthiazole (THZ). The chain is Hydroxyethylthiazole kinase from Listeria monocytogenes serotype 4b (strain F2365).